The sequence spans 1774 residues: Kinesin-like protein KIF20B (1774 aa).

Residues 58-477 (YLQVCLRIRP…LKFSTTAQRV (420 aa)) enclose the Kinesin motor domain. 152-159 (GLTNSGKT) serves as a coordination point for ATP. The residue at position 486 (Ser486) is a Phosphoserine. 2 coiled-coil regions span residues 525–601 (EDVL…KIRE) and 705–747 (QEAI…LVQA). Acidic residues predominate over residues 538 to 555 (EENEETQNMETELTDEDS). 2 disordered regions span residues 538-557 (EENEETQNMETELTDEDSDK) and 740-799 (ESNS…PPAK). The span at 741–778 (SNSLVQALKTSSKVDTSLTSNKSTCNETSEMPKNSRAQ) shows a compositional bias: polar residues. The segment covering 779-788 (THSERKRLNE) has biased composition (basic and acidic residues). Residues 824 to 946 (SEVVEGNRVL…QMQTKIDELR (123 aa)) adopt a coiled-coil conformation. Ser950 is modified (phosphoserine). Positions 1002–1059 (ENSFHASIEAIWEECKEIVKASSKKSHQIQGLEEQIEKLQVEVKGYREENSDLRAQES) are necessary and sufficient for interaction with SHTN1. Positions 1021–1507 (KASSKKSHQI…DEEIQELRKA (487 aa)) form a coiled coil. 2 positions are modified to phosphoserine: Ser1107 and Ser1542. The tract at residues 1514 to 1774 (TENQTMNPKP…KRRLRTRTAK (261 aa)) is interaction with PIN1. Phosphothreonine; by CDK1 is present on Thr1598. Residue Ser1612 is modified to Phosphoserine. The tract at residues 1625–1663 (KKNSTPRSNVKFPVSEHRNSPVKKEQKVSVGPSSKKTYS) is disordered. Over residues 1638–1651 (VSEHRNSPVKKEQK) the composition is skewed to basic and acidic residues. Ser1669 and Ser1694 each carry phosphoserine.

The protein belongs to the TRAFAC class myosin-kinesin ATPase superfamily. Kinesin family. As to quaternary structure, oligomerizes (via kinesin motor domain). Associates with microtubules. Interacts (via C-terminal globular tail region) with PIN1 (via WW domain). Interacts with PRC1. Interacts with SHTN1 (via N-terminus); the interaction is direct and promotes the association of SHTN1 to microtubules in primary neurons. Associates with microtubules. Phosphorylated during mitosis by CDK1. Expressed in the brain (at protein level).

Its subcellular location is the nucleus. The protein resides in the cytoplasm. It is found in the cytoskeleton. It localises to the microtubule organizing center. The protein localises to the centrosome. Its subcellular location is the nucleolus. The protein resides in the nucleoplasm. It is found in the spindle. It localises to the spindle pole. The protein localises to the midbody. Its subcellular location is the cell projection. The protein resides in the axon. It is found in the growth cone. In terms of biological role, plus-end-directed motor enzyme that is required for completion of cytokinesis. Required for proper midbody organization and abscission in polarized cortical stem cells. Plays a role in the regulation of neuronal polarization by mediating the transport of specific cargos. Participates in the mobilization of SHTN1 and in the accumulation of PIP3 in the growth cone of primary hippocampal neurons in a tubulin and actin-dependent manner. In the developing telencephalon, cooperates with SHTN1 to promote both the transition from the multipolar to the bipolar stage and the radial migration of cortical neurons from the ventricular zone toward the superficial layer of the neocortex. Involved in cerebral cortex growth. Acts as an oncogene for promoting bladder cancer cells proliferation, apoptosis inhibition and carcinogenic progression. This chain is Kinesin-like protein KIF20B, found in Mus musculus (Mouse).